The following is a 104-amino-acid chain: Pyrimidine/purine nucleoside phosphorylase (104 aa).

The protein belongs to the nucleoside phosphorylase PpnP family.

The catalysed reaction is a purine D-ribonucleoside + phosphate = a purine nucleobase + alpha-D-ribose 1-phosphate. It carries out the reaction adenosine + phosphate = alpha-D-ribose 1-phosphate + adenine. It catalyses the reaction cytidine + phosphate = cytosine + alpha-D-ribose 1-phosphate. The enzyme catalyses guanosine + phosphate = alpha-D-ribose 1-phosphate + guanine. The catalysed reaction is inosine + phosphate = alpha-D-ribose 1-phosphate + hypoxanthine. It carries out the reaction thymidine + phosphate = 2-deoxy-alpha-D-ribose 1-phosphate + thymine. It catalyses the reaction uridine + phosphate = alpha-D-ribose 1-phosphate + uracil. The enzyme catalyses xanthosine + phosphate = alpha-D-ribose 1-phosphate + xanthine. Catalyzes the phosphorolysis of diverse nucleosides, yielding D-ribose 1-phosphate and the respective free bases. Can use uridine, adenosine, guanosine, cytidine, thymidine, inosine and xanthosine as substrates. Also catalyzes the reverse reactions. This Hydrogenovibrio crunogenus (strain DSM 25203 / XCL-2) (Thiomicrospira crunogena) protein is Pyrimidine/purine nucleoside phosphorylase.